Reading from the N-terminus, the 472-residue chain is 3-isopropylmalate dehydratase large subunit (472 aa).

Cysteine 347, cysteine 409, and cysteine 412 together coordinate [4Fe-4S] cluster.

Belongs to the aconitase/IPM isomerase family. LeuC type 1 subfamily. As to quaternary structure, heterodimer of LeuC and LeuD. [4Fe-4S] cluster is required as a cofactor.

The catalysed reaction is (2R,3S)-3-isopropylmalate = (2S)-2-isopropylmalate. The protein operates within amino-acid biosynthesis; L-leucine biosynthesis; L-leucine from 3-methyl-2-oxobutanoate: step 2/4. Functionally, catalyzes the isomerization between 2-isopropylmalate and 3-isopropylmalate, via the formation of 2-isopropylmaleate. The protein is 3-isopropylmalate dehydratase large subunit of Salinibacter ruber (strain DSM 13855 / M31).